Consider the following 237-residue polypeptide: uncharacterized protein (237 aa).

One can recognise a Response regulatory domain in the interval 3–116 (RILLVEDDER…VVMAKIKSVL (114 aa)). Asp52 carries the 4-aspartylphosphate modification. The segment at residues 131-229 (SRIVELGGLT…IRGQGYQFQV (99 aa)) is a DNA-binding region (ompR/PhoB-type).

Post-translationally, phosphorylated by YvcQ.

Its subcellular location is the cytoplasm. In terms of biological role, member of the two-component regulatory system YvcQ/YvcP. This is an uncharacterized protein from Bacillus subtilis (strain 168).